We begin with the raw amino-acid sequence, 235 residues long: Glucosamine-6-phosphate deaminase (235 aa).

The active-site Proton acceptor; for enolization step is the Asp-62. Asn-128 acts as the For ring-opening step in catalysis. His-130 (proton acceptor; for ring-opening step) is an active-site residue. Glu-135 (for ring-opening step) is an active-site residue.

It belongs to the glucosamine/galactosamine-6-phosphate isomerase family. NagB subfamily.

It catalyses the reaction alpha-D-glucosamine 6-phosphate + H2O = beta-D-fructose 6-phosphate + NH4(+). Its pathway is amino-sugar metabolism; N-acetylneuraminate degradation; D-fructose 6-phosphate from N-acetylneuraminate: step 5/5. Its function is as follows. Catalyzes the reversible isomerization-deamination of glucosamine 6-phosphate (GlcN6P) to form fructose 6-phosphate (Fru6P) and ammonium ion. This chain is Glucosamine-6-phosphate deaminase, found in Latilactobacillus sakei subsp. sakei (strain 23K) (Lactobacillus sakei subsp. sakei).